We begin with the raw amino-acid sequence, 104 residues long: L-rhamnose mutarotase (104 aa).

Tyr-18 serves as a coordination point for substrate. The active-site Proton donor is His-22. Substrate contacts are provided by residues Tyr-41 and 76–77 (WW).

The protein belongs to the rhamnose mutarotase family. As to quaternary structure, homodimer.

The protein localises to the cytoplasm. It carries out the reaction alpha-L-rhamnose = beta-L-rhamnose. Its pathway is carbohydrate metabolism; L-rhamnose metabolism. In terms of biological role, involved in the anomeric conversion of L-rhamnose. This Rhizobium meliloti (strain 1021) (Ensifer meliloti) protein is L-rhamnose mutarotase.